A 109-amino-acid polypeptide reads, in one-letter code: Putative double-stranded DNA mimic protein YciU (109 aa).

It belongs to the putative dsDNA mimic protein family.

Functionally, may act as a double-stranded DNA (dsDNA) mimic. Probably regulates the activity of a dsDNA-binding protein. This chain is Putative double-stranded DNA mimic protein YciU, found in Escherichia coli O45:K1 (strain S88 / ExPEC).